A 467-amino-acid chain; its full sequence is Methionine aminopeptidase 2-1 (467 aa).

Basic and acidic residues predominate over residues 1–10; the sequence is MGSKSPDGHR. Residues 1–105 form a disordered region; the sequence is MGSKSPDGHR…TPPRVSLPSI (105 aa). A compositionally biased stretch (acidic residues) spans 43-55; sequence DGDDEDEDGDDDG. Positions 75–90 are enriched in basic residues; it reads KKRKRKSNKKKKKKTS. Position 219 (H219) interacts with substrate. Positions 240, 251, and 320 each coordinate a divalent metal cation. A substrate-binding site is contributed by H328. E353 and E448 together coordinate a divalent metal cation.

The protein belongs to the peptidase M24A family. Methionine aminopeptidase eukaryotic type 2 subfamily. Requires Co(2+) as cofactor. Zn(2+) is required as a cofactor. Mn(2+) serves as cofactor. It depends on Fe(2+) as a cofactor.

It is found in the cytoplasm. The enzyme catalyses Release of N-terminal amino acids, preferentially methionine, from peptides and arylamides.. In terms of biological role, cotranslationally removes the N-terminal methionine from nascent proteins. The N-terminal methionine is often cleaved when the second residue in the primary sequence is small and uncharged (Met-Ala-, Cys, Gly, Pro, Ser, Thr, or Val). In Arthroderma gypseum (strain ATCC MYA-4604 / CBS 118893) (Microsporum gypseum), this protein is Methionine aminopeptidase 2-1.